Consider the following 606-residue polypeptide: (R)-limonene synthase 1, chloroplastic (606 aa).

Residues 1–32 (MSSCINPSTLVTSVNAFKCLPLATNKAAIRIM) constitute a chloroplast transit peptide. Mn(2+)-binding residues include Asp342 and Asp346. The substrate site is built by Asp342, Asp346, Arg484, Asp487, and Lys503. The DDXXD motif motif lies at 342-346 (DDIYD). Asp487 is a Mn(2+) binding site.

It belongs to the terpene synthase family. Mg(2+) serves as cofactor. The cofactor is Mn(2+).

It is found in the plastid. It localises to the chloroplast. The catalysed reaction is (2E)-geranyl diphosphate = (4R)-limonene + diphosphate. The chain is (R)-limonene synthase 1, chloroplastic from Citrus limon (Lemon).